Here is a 110-residue protein sequence, read N- to C-terminus: UPF0060 membrane protein Dtpsy_1668 (110 aa).

A run of 4 helical transmembrane segments spans residues 7 to 27 (LALF…PWLW), 33 to 53 (SAWL…LLTL), 63 to 83 (AAYG…VDGV), and 86 to 106 (GPWD…IAFA).

Belongs to the UPF0060 family.

It is found in the cell inner membrane. This chain is UPF0060 membrane protein Dtpsy_1668, found in Acidovorax ebreus (strain TPSY) (Diaphorobacter sp. (strain TPSY)).